Reading from the N-terminus, the 708-residue chain is Ubiquitin thioesterase ZRANB1 (708 aa).

Residues 3 to 33 form a RanBP2-type 1 zinc finger; the sequence is ERGIKWACEYCTYENWPSAIKCTMCRAQRPS. Cysteine 10, cysteine 13, cysteine 24, and cysteine 27 together coordinate Zn(2+). The interval 38–73 is disordered; that stretch reads TEDPFKSGSSDVGRDWDPSSTEGGSSPLICPDSSAR. 2 RanBP2-type zinc fingers span residues 84 to 113 and 149 to 178; these read NANKWSCHMCTYLNWPRAIRCTQCLSQRRT and RTQHWTCSICTYENWAKAKKCVVCDHPRPN. 8 residues coordinate Zn(2+): cysteine 90, cysteine 93, cysteine 104, cysteine 107, cysteine 155, cysteine 158, cysteine 169, and cysteine 172. Residues 200 to 223 form a disordered region; that stretch reads RARWRGSCSSGNSQRRSPPTMKRD. The span at 206 to 216 shows a compositional bias: polar residues; that stretch reads SCSSGNSQRRS. ANK repeat units follow at residues 260–290 and 313–340; these read KKTDWLFLNACVGVVEGDLAAIEAYKSSGGD and YTLVHLAIRFQRQDMLAILLTEVSQQAA. One can recognise an OTU domain in the interval 432 to 592; sequence LYALWNRTAG…RGHFSALVAM (161 aa). Cysteine 443 (nucleophile) is an active-site residue. Histidine 585 (proton acceptor) is an active-site residue.

This sequence belongs to the peptidase C64 family. In terms of assembly, interacts with TRAF6. Interacts with APC.

The protein localises to the cytoplasm. It is found in the nucleus. The catalysed reaction is Thiol-dependent hydrolysis of ester, thioester, amide, peptide and isopeptide bonds formed by the C-terminal Gly of ubiquitin (a 76-residue protein attached to proteins as an intracellular targeting signal).. Ubiquitin thioesterase, which specifically hydrolyzes 'Lys-29'-linked and 'Lys-33'-linked diubiquitin. Also cleaves 'Lys-63'-linked chains, but with 40-fold less efficiency compared to 'Lys-29'-linked ones. Positive regulator of the Wnt signaling pathway that deubiquitinates APC protein, a negative regulator of Wnt-mediated transcription. Acts as a regulator of autophagy by mediating deubiquitination of PIK3C3/VPS34, thereby promoting autophagosome maturation. Plays a role in the regulation of cell morphology and cytoskeletal organization. Required in the stress fiber dynamics and cell migration. This Bos taurus (Bovine) protein is Ubiquitin thioesterase ZRANB1.